Consider the following 500-residue polypeptide: NAD(P)H-quinone oxidoreductase chain 4, chloroplastic (500 aa).

Helical transmembrane passes span 4–24 (FPWLTIIVGFPISAGSLMLFL), 35–55 (YTICICILELLITTYAFCYNF), 87–107 (IGTILLTGFITTLAALAAFPV), 113–130 (FFHFLMLAMYSGQIGSFS), 134–154 (LLLFFIMWELELIPVYLLLSM), 167–187 (FILYTAGSSIFLLIGVLGISL), 211–231 (ILFYIGFLIAFAVKSPIIPLH), 242–262 (HYSTCMLLAGILLKMGAYGLV), 272–292 (AHSMFSPWLMVVGTIQIIYAA), 305–325 (IAYSSVSHMGFIIIGIGSITD), 330–350 (GAILQIISHGFIGAALFFLAG), 386–406 (LALPGMSGFVAELIVFFGIIT), 416–436 (ILIIFVMAIGMILTPIYLLSM), and 462–482 (LFLSISILLPIIGIGIYPDFV).

Belongs to the complex I subunit 4 family.

It localises to the plastid. Its subcellular location is the chloroplast thylakoid membrane. The catalysed reaction is a plastoquinone + NADH + (n+1) H(+)(in) = a plastoquinol + NAD(+) + n H(+)(out). The enzyme catalyses a plastoquinone + NADPH + (n+1) H(+)(in) = a plastoquinol + NADP(+) + n H(+)(out). The polypeptide is NAD(P)H-quinone oxidoreductase chain 4, chloroplastic (Arabis hirsuta (Hairy rock-cress)).